A 355-amino-acid chain; its full sequence is Uroporphyrinogen decarboxylase (355 aa).

Residues 36–40 (RQAGR), Asp85, Tyr160, Ser215, and His334 contribute to the substrate site.

It belongs to the uroporphyrinogen decarboxylase family. In terms of assembly, homodimer.

The protein localises to the cytoplasm. It catalyses the reaction uroporphyrinogen III + 4 H(+) = coproporphyrinogen III + 4 CO2. Its pathway is porphyrin-containing compound metabolism; protoporphyrin-IX biosynthesis; coproporphyrinogen-III from 5-aminolevulinate: step 4/4. Its function is as follows. Catalyzes the decarboxylation of four acetate groups of uroporphyrinogen-III to yield coproporphyrinogen-III. This Rhodococcus jostii (strain RHA1) protein is Uroporphyrinogen decarboxylase.